The sequence spans 372 residues: Peptidyl-prolyl cis-trans isomerase D (372 aa).

Residues Tyr-14–Glu-178 form the PPIase cyclophilin-type domain. TPR repeat units follow at residues Ala-219–Glu-252, Phe-271–Lys-304, and Ala-309–Asp-342.

Belongs to the cyclophilin-type PPIase family. PPIase D subfamily.

It is found in the cytoplasm. The enzyme catalyses [protein]-peptidylproline (omega=180) = [protein]-peptidylproline (omega=0). In terms of biological role, PPIases accelerate the folding of proteins. It catalyzes the cis-trans isomerization of proline imidic peptide bonds in oligopeptides. In Gibberella zeae (strain ATCC MYA-4620 / CBS 123657 / FGSC 9075 / NRRL 31084 / PH-1) (Wheat head blight fungus), this protein is Peptidyl-prolyl cis-trans isomerase D (CPR6).